Consider the following 198-residue polypeptide: HTH-type transcriptional regulator BetI (198 aa).

Residues 8–68 (KIRRPQLVSA…ETMRDILRQL (61 aa)) enclose the HTH tetR-type domain. Residues 31–50 (SVSLISQEAGVSSGIINHYF) constitute a DNA-binding region (H-T-H motif).

The protein operates within amine and polyamine biosynthesis; betaine biosynthesis via choline pathway [regulation]. Functionally, repressor involved in the biosynthesis of the osmoprotectant glycine betaine. It represses transcription of the choline transporter BetT and the genes of BetAB involved in the synthesis of glycine betaine. In Vibrio vulnificus (strain YJ016), this protein is HTH-type transcriptional regulator BetI.